Consider the following 1194-residue polypeptide: Protein argonaute 3 (1194 aa).

Residues 1–98 show a composition bias toward basic and acidic residues; the sequence is MDRGGYRGGR…GRGGGGDRGR (98 aa). Disordered stretches follow at residues 1-277 and 299-341; these read MDRG…VSQS and TVLP…DKGG. A compositionally biased stretch (low complexity) spans 142–158; sequence PPSSSQAQVSQGVAPGD. The segment covering 167–180 has biased composition (basic and acidic residues); the sequence is VGRDGVGDVGRDGV. Gly residues predominate over residues 181 to 214; sequence GDVGQGGVGDVGQVGVGDVGQGGVGDVGQGGVGD. A compositionally biased stretch (basic and acidic residues) spans 215-228; the sequence is VGRDGVGDVGRDGV. The span at 229–238 shows a compositional bias: gly residues; it reads GDVGRGGVGD. Composition is skewed to low complexity over residues 256–277 and 299–316; these read QLQQ…VSQS and TVLP…HTAS. Residues 317–326 are compositionally biased toward polar residues; the sequence is GSQVMTPKPS. The span at 327–341 shows a compositional bias: basic and acidic residues; sequence SSDKKEPVKRPDKGG. The PAZ domain maps to 540-656; it reads SVIEYLKLYF…VPMEFCNLVE (117 aa). One can recognise a Piwi domain in the interval 841–1145; that stretch reads LVLCAMTGKH…AASRGRVYYE (305 aa).

This sequence belongs to the argonaute family. Ago subfamily.

In terms of biological role, involved in RNA-mediated post-transcriptional gene silencing (PTGS). Main component of the RNA-induced silencing complex (RISC) that binds to a short guide RNA such as a microRNA (miRNA) or small interfering RNA (siRNA). RISC uses the mature miRNA or siRNA as a guide for slicer-directed cleavage of homologous mRNAs to repress gene expression. This is Protein argonaute 3 (AGO3) from Arabidopsis thaliana (Mouse-ear cress).